The primary structure comprises 76 residues: Rhesus theta defensin-1/3 subunit A (76 aa).

Residues 1 to 22 (MRTFALLTAMLLLVALHAQAEA) form the signal peptide. A propeptide spanning residues 23–64 (RQARADEAAAQQQPGTDDQGMAHSFTWPENAALPLSESAKGL) is cleaved from the precursor. The disordered stretch occupies residues 25 to 45 (ARADEAAAQQQPGTDDQGMAH). Residue Arg-65 forms a Cyclopeptide (Arg-Cys) (interchain with C-73 in subunit A); in form RTD-3 linkage. Arg-65 participates in a covalent cross-link: Cyclopeptide (Arg-Cys) (interchain with C-73 in subunit B); in form RTD-1. Cys-68 and Cys-73 are disulfide-bonded. A Cyclopeptide (Cys-Arg) (interchain with R-65 in subunit A); in form RTD-3 cross-link involves residue Cys-73. A Cyclopeptide (Cys-Arg) (interchain with R-65 in subunit B); in form RTD-1 cross-link involves residue Cys-73. The propeptide occupies 74–76 (RLL).

It belongs to the alpha-defensin family. Theta subfamily. In terms of assembly, RTD-1 is a cyclic heterodimer composed of subunits A and B; disulfide-linked. RTD-3 is a cyclic homodimer composed of two subunits A; disulfide-linked. In terms of processing, forms a cyclic peptide with subunit A (RTD-3) or with subunit B (RTD-1). An additional intersubunit disulfide bond is formed. As to expression, RTD-1 is expressed in bone marrow. Detected in promyelocytes, myelocytes and mature neutrophils and monocytes.

In terms of biological role, RTD-1 and RTD-3 have similar antimicrobial activities against the Gram-positive bacteria S.aureus 502A and L.monocytogenes, the Gram-negative bacteria S.typhimurium and E.coli ML35, and the fungi C.albicans 16820 and C.neoformans 271A. The polypeptide is Rhesus theta defensin-1/3 subunit A (RTD1A) (Macaca mulatta (Rhesus macaque)).